The primary structure comprises 626 residues: Chaperone protein DnaK (626 aa).

Thr-197 carries the phosphothreonine; by autocatalysis modification. Residues 595 to 614 show a composition bias toward low complexity; that stretch reads QNMAQQQQAQGGAQQQNQNK. The tract at residues 595–626 is disordered; the sequence is QNMAQQQQAQGGAQQQNQNKGGDDDVIDAEVE.

It belongs to the heat shock protein 70 family.

Functionally, acts as a chaperone. This chain is Chaperone protein DnaK, found in Nautilia profundicola (strain ATCC BAA-1463 / DSM 18972 / AmH).